A 54-amino-acid chain; its full sequence is U-myrmicitoxin(01)-Tb5a (54 aa).

A signal peptide spans 1–26 (MQLSHLLLAFAMIFVMTIMYAPQVQA). Positions 27-38 (DAWADANADADV) are excised as a propeptide.

It belongs to the formicidae venom precursor-01 superfamily. Contains 1 disulfide bond. Expressed by the venom gland.

The protein resides in the secreted. The protein is U-myrmicitoxin(01)-Tb5a of Tetramorium bicarinatum (Tramp ant).